Reading from the N-terminus, the 322-residue chain is MRFKGLDLNLLVALDALMTERKLTAAARSINLSQPAMSAAITRLRTYFRDELFTMNGRELVPTPRAEALAPAVREALLHIHLSIISWDPFNPAQSDRSFRIILSDFMTLMFLERVVVRVAREAPAVSFELLPFSDEPDELLRRGDVDFLILPEMFMSHTHPRAKLFDERFVCVSCPTNQKLPPQLSIDNYVSMGHVAAQFGKQRPSVEEWLLREHGLRRRVEVAVPGFTMIPSFLSGTDRIATLPLRLAMHFAKAIPLRITELPQPIFPAFTEAVQWPAPHSSDPASLWMREIFLQEASRVEFQSETSAHALSKADGAIRHP.

Residues leucine 6–threonine 63 form the HTH lysR-type domain. Positions leucine 23 to threonine 42 form a DNA-binding region, H-T-H motif.

It belongs to the LysR transcriptional regulatory family.

In terms of biological role, regulates the expression of the nod abcFE genes which encode other nodulation proteins. NodD is also a negative regulator of its own expression. Binds flavonoids as inducers. In Sinorhizobium fredii (strain NBRC 101917 / NGR234), this protein is Nodulation protein D 1 (nodD1).